A 205-amino-acid polypeptide reads, in one-letter code: Protein N-terminal glutamine amidohydrolase (205 aa).

Catalysis depends on residues cysteine 20, histidine 74, and aspartate 90.

The protein belongs to the NTAQ1 family. As to quaternary structure, monomer.

The enzyme catalyses N-terminal L-glutaminyl-[protein] + H2O = N-terminal L-glutamyl-[protein] + NH4(+). Functionally, mediates the side-chain deamidation of N-terminal glutamine residues to glutamate, an important step in N-end rule pathway of protein degradation. Conversion of the resulting N-terminal glutamine to glutamate renders the protein susceptible to arginylation, polyubiquitination and degradation as specified by the N-end rule. Does not act on substrates with internal or C-terminal glutamine and does not act on non-glutamine residues in any position. This chain is Protein N-terminal glutamine amidohydrolase (tun), found in Drosophila erecta (Fruit fly).